A 660-amino-acid chain; its full sequence is MSSIESFKQEGRVFDSPVDFVNNAAISGMEAYRALCAEAADDYEGFWARLAQQNLHWTKPFTKKLDESNAPFYKWFEDGELNVSWNCLDRHLHNGNADKVAIIFEADDGNVTRITYKELHERVCKFANGLKSLSINKGDRVIIYMPMSIDGIAAMQACARIGATHSVVFGGFSAKSLHERIIDAGAVAVLTADYQVRGGKNLPLKAIVDEALAMGGCDTIRNVVVYKRTGGAVDFVERRDIWLHELVEQRTSECAPEPVGAEHPLFILYTSGSTGKPKGVQHSSAGYLLWAMLTMKWVFDIKPNDVYWCTADIGWVTGHTYVTYGPLAVGATQIVFEGVPMYPNAGRFWEMVQKHKVSIFYTAPTAIRSLIKAAEADPSTHPSKYDLSSLRLLGSVGEPINPEAWMWYYKNIGGERCPIVDTFWQTETGGHVISPLPGATPMVPGSCTLPLPGIIAAVVDDGGHDLPNGKGGLLVIKRPWPAMIRNIWNDPERFEKSYFPHELGGRTYLAGDGAIRNEETGYFTITGRIDDVLNISGHRMGTAEIESALVANPMVAEAAVVGKPDETTGESICAFVVLKRVRPEGDEAKQIAKELRDWVAKEIGPIAKPKEIRFGDNLPKTRSGKIMRRLLRVLAKDEDITQDISTLENPAILEQLKQAQ.

Residues 197 to 200 and Thr-317 each bind CoA; that span reads RGGK. ATP-binding positions include 397-399, 421-426, Asp-512, and Arg-528; these read GEP and DTFWQT. Ser-536 provides a ligand contact to CoA. Arg-539 is an ATP binding site. Mg(2+) contacts are provided by Val-550 and Val-555. Residue Lys-625 is modified to N6-acetyllysine.

This sequence belongs to the ATP-dependent AMP-binding enzyme family. Requires Mg(2+) as cofactor. Acetylated. Deacetylation by the SIR2-homolog deacetylase activates the enzyme.

It carries out the reaction acetate + ATP + CoA = acetyl-CoA + AMP + diphosphate. Its function is as follows. Catalyzes the conversion of acetate into acetyl-CoA (AcCoA), an essential intermediate at the junction of anabolic and catabolic pathways. AcsA undergoes a two-step reaction. In the first half reaction, AcsA combines acetate with ATP to form acetyl-adenylate (AcAMP) intermediate. In the second half reaction, it can then transfer the acetyl group from AcAMP to the sulfhydryl group of CoA, forming the product AcCoA. The sequence is that of Acetyl-coenzyme A synthetase from Herminiimonas arsenicoxydans.